We begin with the raw amino-acid sequence, 180 residues long: Large ribosomal subunit protein uL10 (180 aa).

The protein belongs to the universal ribosomal protein uL10 family. As to quaternary structure, part of the ribosomal stalk of the 50S ribosomal subunit. The N-terminus interacts with L11 and the large rRNA to form the base of the stalk. The C-terminus forms an elongated spine to which L12 dimers bind in a sequential fashion forming a multimeric L10(L12)X complex.

Forms part of the ribosomal stalk, playing a central role in the interaction of the ribosome with GTP-bound translation factors. The chain is Large ribosomal subunit protein uL10 (rplJ) from Treponema pallidum (strain Nichols).